Reading from the N-terminus, the 419-residue chain is Gamma-glutamyl phosphate reductase (419 aa).

This sequence belongs to the gamma-glutamyl phosphate reductase family.

Its subcellular location is the cytoplasm. It carries out the reaction L-glutamate 5-semialdehyde + phosphate + NADP(+) = L-glutamyl 5-phosphate + NADPH + H(+). It participates in amino-acid biosynthesis; L-proline biosynthesis; L-glutamate 5-semialdehyde from L-glutamate: step 2/2. In terms of biological role, catalyzes the NADPH-dependent reduction of L-glutamate 5-phosphate into L-glutamate 5-semialdehyde and phosphate. The product spontaneously undergoes cyclization to form 1-pyrroline-5-carboxylate. The protein is Gamma-glutamyl phosphate reductase of Oleidesulfovibrio alaskensis (strain ATCC BAA-1058 / DSM 17464 / G20) (Desulfovibrio alaskensis).